The following is a 226-amino-acid chain: ATP synthase F(0) complex subunit a (226 aa).

A run of 6 helical transmembrane segments spans residues phenylalanine 6–phenylalanine 26, tryptophan 68–leucine 88, glutamine 97–phenylalanine 117, isoleucine 138–valine 158, isoleucine 164–isoleucine 184, and alanine 189–isoleucine 209.

The protein belongs to the ATPase A chain family. As to quaternary structure, component of the ATP synthase complex composed at least of ATP5F1A/subunit alpha, ATP5F1B/subunit beta, ATP5MC1/subunit c (homooctomer), MT-ATP6/subunit a, MT-ATP8/subunit 8, ATP5ME/subunit e, ATP5MF/subunit f, ATP5MG/subunit g, ATP5MK/subunit k, ATP5MJ/subunit j, ATP5F1C/subunit gamma, ATP5F1D/subunit delta, ATP5F1E/subunit epsilon, ATP5PF/subunit F6, ATP5PB/subunit b, ATP5PD/subunit d, ATP5PO/subunit OSCP. ATP synthase complex consists of a soluble F(1) head domain (subunits alpha(3) and beta(3)) - the catalytic core - and a membrane F(0) domain - the membrane proton channel (subunits c, a, 8, e, f, g, k and j). These two domains are linked by a central stalk (subunits gamma, delta, and epsilon) rotating inside the F1 region and a stationary peripheral stalk (subunits F6, b, d, and OSCP). Interacts with DNAJC30; interaction is direct.

The protein localises to the mitochondrion inner membrane. The catalysed reaction is H(+)(in) = H(+)(out). Subunit a, of the mitochondrial membrane ATP synthase complex (F(1)F(0) ATP synthase or Complex V) that produces ATP from ADP in the presence of a proton gradient across the membrane which is generated by electron transport complexes of the respiratory chain. ATP synthase complex consist of a soluble F(1) head domain - the catalytic core - and a membrane F(1) domain - the membrane proton channel. These two domains are linked by a central stalk rotating inside the F(1) region and a stationary peripheral stalk. During catalysis, ATP synthesis in the catalytic domain of F(1) is coupled via a rotary mechanism of the central stalk subunits to proton translocation. With the subunit c (ATP5MC1), forms the proton-conducting channel in the F(0) domain, that contains two crucial half-channels (inlet and outlet) that facilitate proton movement from the mitochondrial intermembrane space (IMS) into the matrix. Protons are taken up via the inlet half-channel and released through the outlet half-channel, following a Grotthuss mechanism. The sequence is that of ATP synthase F(0) complex subunit a from Bos indicus (Zebu).